We begin with the raw amino-acid sequence, 1308 residues long: D-lysergyl-peptide-synthetase subunit 2 (1308 aa).

Residues 261–658 (EWCRRTPSAV…CRKSTQVKLR (398 aa)) form an adenylation (A) domain region. One can recognise a Carrier domain in the interval 803 to 871 (IEEAFQRFFA…ELSELARHTK (69 aa)). Ser835 is modified (O-(pantetheine 4'-phosphoryl)serine). The tract at residues 910–1299 (EDVYPCTPLQ…HAAPRTLIGD (390 aa)) is condensation (C) domain.

It belongs to the NRP synthetase family.

The protein operates within alkaloid biosynthesis; ergot alkaloid biosynthesis. In terms of biological role, D-lysergyl-peptide-synthetase subunit 2; part of the gene cluster that mediates the biosynthesis of fungal ergot alkaloid. DmaW catalyzes the first step of ergot alkaloid biosynthesis by condensing dimethylallyl diphosphate (DMAP) and tryptophan to form 4-dimethylallyl-L-tryptophan. The second step is catalyzed by the methyltransferase easF that methylates 4-dimethylallyl-L-tryptophan in the presence of S-adenosyl-L-methionine, resulting in the formation of 4-dimethylallyl-L-abrine. The catalase easC and the FAD-dependent oxidoreductase easE then transform 4-dimethylallyl-L-abrine to chanoclavine-I which is further oxidized by EasD in the presence of NAD(+), resulting in the formation of chanoclavine-I aldehyde. Agroclavine dehydrogenase easG then mediates the conversion of chanoclavine-I aldehyde to agroclavine via a non-enzymatic adduct reaction: the substrate is an iminium intermediate that is formed spontaneously from chanoclavine-I aldehyde in the presence of glutathione. The presence of easA is not required to complete this reaction. Further conversion of agroclavine to paspalic acid is a two-step process involving oxidation of agroclavine to elymoclavine and of elymoclavine to paspalic acid, the second step being performed by the elymoclavine oxidase cloA. Paspalic acid is then further converted to D-lysergic acid. Ergopeptines are assembled from D-lysergic acid and three different amino acids by the D-lysergyl-peptide-synthetases composed each of a monomudular and a trimodular nonribosomal peptide synthetase subunit. LpsB and lpsC encode the monomodular subunits responsible for D-lysergic acid activation and incorporation into the ergopeptine backbone. LpsA1 and A2 subunits encode the trimodular nonribosomal peptide synthetase assembling the tripeptide portion of ergopeptines. LpsA1 is responsible for formation of the major ergopeptine, ergotamine, and lpsA2 for alpha-ergocryptine, the minor ergopeptine of the total alkaloid mixture elaborated by C.purpurea. D-lysergyl-tripeptides are assembled by the nonribosomal peptide synthetases and released as N-(D-lysergyl-aminoacyl)-lactams. Cyclolization of the D-lysergyl-tripeptides is performed by the Fe(2+)/2-ketoglutarate-dependent dioxygenase easH which introduces a hydroxyl group into N-(D-lysergyl-aminoacyl)-lactam at alpha-C of the aminoacyl residue followed by spontaneous condensation with the terminal lactam carbonyl group. In Claviceps purpurea (Ergot fungus), this protein is D-lysergyl-peptide-synthetase subunit 2.